The primary structure comprises 203 residues: Serine hydrolase-like protein (203 aa).

Residues 33–145 (PPVLCLHGWL…FLLESDEMEN (113 aa)) form the AB hydrolase-1 domain. The active site involves S108.

This sequence belongs to the AB hydrolase superfamily.

Its function is as follows. Putative serine hydrolase. In Homo sapiens (Human), this protein is Serine hydrolase-like protein (SERHL).